Reading from the N-terminus, the 214-residue chain is Adenylate kinase (214 aa).

10-15 contacts ATP; it reads GAGKGT. Positions 30–59 are NMP; that stretch reads STGDMLRAAIKAGTELGKQAKAVIDAGQLV. Residues Thr31, Arg36, 57 to 59, 85 to 88, and Gln92 each bind AMP; these read QLV and GFPR. The segment at 122–159 is LID; sequence GRRAHLPSGRTYHVVYNPPKVEGKDDVTGEDLVVRDDD. ATP contacts are provided by residues Arg123 and 132 to 133; that span reads TY. Residues Arg156 and Arg167 each coordinate AMP. Lys200 lines the ATP pocket.

The protein belongs to the adenylate kinase family. In terms of assembly, monomer.

Its subcellular location is the cytoplasm. It carries out the reaction AMP + ATP = 2 ADP. Its pathway is purine metabolism; AMP biosynthesis via salvage pathway; AMP from ADP: step 1/1. Its function is as follows. Catalyzes the reversible transfer of the terminal phosphate group between ATP and AMP. Plays an important role in cellular energy homeostasis and in adenine nucleotide metabolism. This Vibrio vulnificus (strain YJ016) protein is Adenylate kinase.